The primary structure comprises 481 residues: MEDLLDQVVVELHRARSCLSDPLVFTQAAVIGSILFVFLLGLYNYFLHPIAHIKGPFLAAVTPISLIRALRDIHNPGPDNHHYTKRGTSEDLILRFVFGANNILLVDEGEDHKRLRGALQPAFTAKAMRDQQDITHYHVQKTVERLLEAAMDPSQTISLTKELNKLVWGNVGNLAFGEPATLEQLENHEKAKDLHAQIAPILEFFQYLNGNPILGRAARGLVGISRKVFGLSGNILGKDQLRRHIASQQGQKNFLTAILGAKESSGLSFDEIHSNMLLLLMGGYDSSAASLSAIFYHLLREPQQYKRLQSELHHAYSSVNDITCNSLLSQPMLNACINESLRLVPPFNGHGSHRVTTSGTMIDGVWVPAGTLISADFYSLHRDPSCWAFPDEYRPERWLKEHQGPGTPFENDVKTAWRPFSLGPRVCVGREMALQSIRLAVSKIVYTFDMTLANRDFVWDRDAGSHYMWHDFDIAVTLAKA.

A helical membrane pass occupies residues 23 to 43 (LVFTQAAVIGSILFVFLLGLY). Residue Asn338 is glycosylated (N-linked (GlcNAc...) asparagine). Residue Cys427 participates in heme binding.

This sequence belongs to the cytochrome P450 family. Requires heme as cofactor.

It is found in the membrane. The protein operates within secondary metabolite biosynthesis; terpenoid biosynthesis. Cytochrome P450 monooxygenase; part of the gene cluster that mediates the biosynthesis of diterpenoid pyrones. The first step of the pathway is the synthesis of the alpha-pyrone moiety by the polyketide synthase dpfgA via condensation of one acetyl-CoA starter unit with 3 malonyl-CoA units and 2 methylations. The alpha-pyrone is then combined with geranylgeranyl pyrophosphate (GGPP) formed by the GGPP synthase dpfgD through the action of the prenyltransferase dpfgC to yield a linear alpha-pyrone diterpenoid. Subsequent steps in the diterpenoid pyrone biosynthetic pathway involve the decalin core formation, which is initiated by the epoxidation of the C10-C11 olefin by the FAD-dependent oxidoreductase dpfgE, and is followed by a cyclization cascade catalyzed by the terpene cyclase dpfgB. The short chain dehydrogenase/reductase dpfgG then oxidizes the 8S hydroxy group to a ketone and the short chain dehydrogenase/reductase dpfgH reduces the ketone to the 8R hydroxy group to yield higginsianin B. Higginsianin B is further methylated by the methyltransferase dpfgI to produce the intermediate named FDDP B. The cytochrome P450 monooxygenase dfgpJ then catalyzes a three-step oxidation at C-27 to generate a carboxylic acid as well as C-26 hydroxylation. Finally, methyltransferase dpfgK methylates the carboxylic acid generated by dpfgJ, yielding the final diterpenoid pyrones from the pathway which were named FDDP D and FDDP E. In Gibberella zeae (strain ATCC MYA-4620 / CBS 123657 / FGSC 9075 / NRRL 31084 / PH-1) (Wheat head blight fungus), this protein is Cytochrome P450 monooxygenase dpfgJ.